The following is a 257-amino-acid chain: MWIGIISLFPEMFRAITDYGVTGRAVKNGLLSIDSWSPRDFTHDRHRTVDDRPYGGGPGMLMMVQPLRDAIHAAKAAAGEGAKVIYLSPQGRKLDQAGVSELATNEKLILVCGRYEGIDERVIQTEIDEEWSIGDYVLSGGELPAMTLIDSVARFIPGVLGHEASATEDSFADGLLDCPHYTRPEVLEGMEVPPVLLSGNHAEIRRWRLKQSLGRTWLRRPELLENLALTEEQAKLLAEFKTEHAQQQHRHDGTGDA.

Residues glycine 113 and 133 to 138 contribute to the S-adenosyl-L-methionine site; that span reads IGDYVL.

The protein belongs to the RNA methyltransferase TrmD family. In terms of assembly, homodimer.

It localises to the cytoplasm. It carries out the reaction guanosine(37) in tRNA + S-adenosyl-L-methionine = N(1)-methylguanosine(37) in tRNA + S-adenosyl-L-homocysteine + H(+). Its function is as follows. Specifically methylates guanosine-37 in various tRNAs. The polypeptide is tRNA (guanine-N(1)-)-methyltransferase (Cronobacter sakazakii (strain ATCC BAA-894) (Enterobacter sakazakii)).